Consider the following 230-residue polypeptide: Ribose-5-phosphate isomerase A (230 aa).

Residues 32-35 (TGST), 85-88 (DGAD), and 98-101 (KGGG) contribute to the substrate site. The active-site Proton acceptor is the glutamate 107. Lysine 125 lines the substrate pocket.

Belongs to the ribose 5-phosphate isomerase family. As to quaternary structure, homodimer.

It catalyses the reaction aldehydo-D-ribose 5-phosphate = D-ribulose 5-phosphate. The protein operates within carbohydrate degradation; pentose phosphate pathway; D-ribose 5-phosphate from D-ribulose 5-phosphate (non-oxidative stage): step 1/1. In terms of biological role, catalyzes the reversible conversion of ribose-5-phosphate to ribulose 5-phosphate. The chain is Ribose-5-phosphate isomerase A from Burkholderia ambifaria (strain ATCC BAA-244 / DSM 16087 / CCUG 44356 / LMG 19182 / AMMD) (Burkholderia cepacia (strain AMMD)).